A 1104-amino-acid polypeptide reads, in one-letter code: Lon protease homolog, mitochondrial (1104 aa).

A mitochondrion-targeting transit peptide spans 1–58 (MLPLRAFARLAQRPRLSRPTQLARSSLPRPSPSRPAAHYLALAPAPSTRFLHSSPPVL). Disordered regions lie at residues 8–144 (ARLA…KEVA) and 275–295 (EGSQ…SEVP). The span at 22–46 (LARSSLPRPSPSRPAAHYLALAPAP) shows a compositional bias: low complexity. Residues 80–103 (KQDDQVEKPLPDAESSKSAEERAK) show a composition bias toward basic and acidic residues. Positions 104 to 128 (SQSSKPDIKASSSDSVSSSAPAPGS) are enriched in low complexity. The segment covering 129 to 139 (ADGGSPPGAGG) has biased composition (gly residues). The Lon N-terminal domain occupies 155–444 (VLAIPITHRP…RALVLLKKEL (290 aa)). A compositionally biased stretch (basic and acidic residues) spans 281 to 291 (AKGEGEVKSFE). 597-604 (GPPGVGKT) serves as a coordination point for ATP. Positions 895–1082 (SPPAGVSTGL…RQVLHEAFRG (188 aa)) constitute a Lon proteolytic domain. Active-site residues include serine 987 and lysine 1030.

The protein belongs to the peptidase S16 family. Homohexamer or homoheptamer. Organized in a ring with a central cavity.

The protein resides in the mitochondrion matrix. It catalyses the reaction Hydrolysis of proteins in presence of ATP.. ATP-dependent serine protease that mediates the selective degradation of misfolded, unassembled or oxidatively damaged polypeptides as well as certain short-lived regulatory proteins in the mitochondrial matrix. May also have a chaperone function in the assembly of inner membrane protein complexes. Participates in the regulation of mitochondrial gene expression and in the maintenance of the integrity of the mitochondrial genome. Binds to mitochondrial DNA in a site-specific manner. This Cryptococcus neoformans var. neoformans serotype D (strain JEC21 / ATCC MYA-565) (Filobasidiella neoformans) protein is Lon protease homolog, mitochondrial.